The chain runs to 425 residues: Tyrosine--tRNA ligase (425 aa).

L-tyrosine is bound at residue Tyr-34. The short motif at 39–48 (PTADSLHVGN) is the 'HIGH' region element. Residues Tyr-171 and Gln-175 each contribute to the L-tyrosine site. The 'KMSKS' region signature appears at 231 to 235 (KYGKS). Lys-234 serves as a coordination point for ATP. One can recognise an S4 RNA-binding domain in the interval 358–424 (APLVELLVHA…GKRTYTVVKI (67 aa)).

The protein belongs to the class-I aminoacyl-tRNA synthetase family. TyrS type 1 subfamily. As to quaternary structure, homodimer.

It localises to the cytoplasm. It catalyses the reaction tRNA(Tyr) + L-tyrosine + ATP = L-tyrosyl-tRNA(Tyr) + AMP + diphosphate + H(+). Its function is as follows. Catalyzes the attachment of tyrosine to tRNA(Tyr) in a two-step reaction: tyrosine is first activated by ATP to form Tyr-AMP and then transferred to the acceptor end of tRNA(Tyr). This is Tyrosine--tRNA ligase from Opitutus terrae (strain DSM 11246 / JCM 15787 / PB90-1).